The chain runs to 262 residues: Protein BcsX (262 aa).

Its pathway is glycan metabolism; bacterial cellulose biosynthesis. The chain is Protein BcsX (bcsX) from Komagataeibacter xylinus (Gluconacetobacter xylinus).